The primary structure comprises 128 residues: Z-ring associated protein G (128 aa).

The helical transmembrane segment at 7 to 27 (EIWFSISIAFLIGTLCGVLVM) threads the bilayer. A coiled-coil region spans residues 37 to 75 (QIQLKSELASAEAKIEEQKQQLERHFEQSANLLENLAED). The tract at residues 105-128 (NHANGDEDNQPRDYSDGSSGLLKS) is disordered. Residues 107 to 119 (ANGDEDNQPRDYS) show a composition bias toward basic and acidic residues.

It belongs to the ZapG family. As to quaternary structure, homotetramer. In solution, is primarily monomeric but forms small amounts of stable tetramer and hexadecamer. The crystal structure of the cytosolic region shows a coiled-coil tetramer in the asymmetric unit that is very likely to be a physiologically relevant assembly of the protein.

It is found in the cell inner membrane. In terms of biological role, involved in cell division, cell envelope biogenesis and cell shape maintenance. This Haemophilus ducreyi (strain 35000HP / ATCC 700724) protein is Z-ring associated protein G.